Reading from the N-terminus, the 121-residue chain is Immunoglobulin heavy variable 6-1 (121 aa).

Positions 1–20 (MSVSFLIFLPVLGLPWGVLS) are cleaved as a signal peptide. Residues 21–45 (QVQLQQSGPGLVKPSQTLSLTCAIS) are framework-1. An Ig-like domain is found at 21-121 (QVQLQQSGPG…EDTAVYYCAR (101 aa)). A disulfide bridge links Cys42 with Cys119. The tract at residues 46–55 (GDSVSSNSAA) is complementarity-determining-1. Residues 56-72 (WNWIRQSPSRGLEWLGR) form a framework-2 region. Residues 73 to 81 (TYYRSKWYN) form a complementarity-determining-2 region. The framework-3 stretch occupies residues 82–119 (DYAVSVKSRITINPDTSKNQFSLQLNSVTPEDTAVYYC). Residues 120–121 (AR) form a complementarity-determining-3 region.

As to quaternary structure, immunoglobulins are composed of two identical heavy chains and two identical light chains; disulfide-linked.

Its subcellular location is the secreted. The protein localises to the cell membrane. Its function is as follows. V region of the variable domain of immunoglobulin heavy chains that participates in the antigen recognition. Immunoglobulins, also known as antibodies, are membrane-bound or secreted glycoproteins produced by B lymphocytes. In the recognition phase of humoral immunity, the membrane-bound immunoglobulins serve as receptors which, upon binding of a specific antigen, trigger the clonal expansion and differentiation of B lymphocytes into immunoglobulins-secreting plasma cells. Secreted immunoglobulins mediate the effector phase of humoral immunity, which results in the elimination of bound antigens. The antigen binding site is formed by the variable domain of one heavy chain, together with that of its associated light chain. Thus, each immunoglobulin has two antigen binding sites with remarkable affinity for a particular antigen. The variable domains are assembled by a process called V-(D)-J rearrangement and can then be subjected to somatic hypermutations which, after exposure to antigen and selection, allow affinity maturation for a particular antigen. This Homo sapiens (Human) protein is Immunoglobulin heavy variable 6-1.